The primary structure comprises 2443 residues: Spatacsin (2443 aa).

Position 1955 is a phosphoserine (Ser1955).

In terms of assembly, interacts with AP5Z1, AP5B1, AP5S1 and ZFYVE26. Expressed in all structures of brain, with a high expression in cerebellum. Expressed in cortical projection neurons.

The protein localises to the cytoplasm. The protein resides in the cytosol. It localises to the nucleus. It is found in the cell projection. Its subcellular location is the axon. The protein localises to the dendrite. May play a role in neurite plasticity by maintaining cytoskeleton stability and regulating synaptic vesicle transport. The protein is Spatacsin (SPG11) of Homo sapiens (Human).